A 195-amino-acid polypeptide reads, in one-letter code: Imidazoleglycerol-phosphate dehydratase (195 aa).

This sequence belongs to the imidazoleglycerol-phosphate dehydratase family.

It localises to the cytoplasm. The enzyme catalyses D-erythro-1-(imidazol-4-yl)glycerol 3-phosphate = 3-(imidazol-4-yl)-2-oxopropyl phosphate + H2O. It functions in the pathway amino-acid biosynthesis; L-histidine biosynthesis; L-histidine from 5-phospho-alpha-D-ribose 1-diphosphate: step 6/9. The polypeptide is Imidazoleglycerol-phosphate dehydratase (Citrifermentans bemidjiense (strain ATCC BAA-1014 / DSM 16622 / JCM 12645 / Bem) (Geobacter bemidjiensis)).